A 585-amino-acid chain; its full sequence is Putative ABC transporter ATP-binding protein MG187 (585 aa).

The 461-residue stretch at I8 to L468 folds into the ABC transporter domain. G40–T47 provides a ligand contact to ATP.

This sequence belongs to the ABC transporter superfamily.

The protein is Putative ABC transporter ATP-binding protein MG187 of Mycoplasma genitalium (strain ATCC 33530 / DSM 19775 / NCTC 10195 / G37) (Mycoplasmoides genitalium).